We begin with the raw amino-acid sequence, 2729 residues long: 3-methylorcinaldehyde synthase (2729 aa).

The tract at residues 99–238 (LPAALLIPLA…GTISNLTRQL (140 aa)) is N-terminal acylcarrier protein transacylase domain (SAT). Positions 361–373 (SLASTVDINSGNG) are enriched in polar residues. Positions 361–391 (SLASTVDINSGNGKTRRVKPADAQSSANSTH) are disordered. The region spanning 397 to 828 (DTDIAIVGMS…GSNASAVLVQ (432 aa)) is the Ketosynthase family 3 (KS3) domain. Residues Cys-571, His-706, and His-748 each act as for beta-ketoacyl synthase activity in the active site. The interval 942-1230 (FGGQVSCFVG…FLEAGTNSSV (289 aa)) is malonyl-CoA:ACP transacylase (MAT) domain. Ser-1029 serves as the catalytic For acyl/malonyl transferase activity. The interval 1345-1479 (ETILTFHSSD…GTVAFKNPGD (135 aa)) is N-terminal hotdog fold. The 325-residue stretch at 1345 to 1669 (ETILTFHSSD…YVKIARPSME (325 aa)) folds into the PKS/mFAS DH domain. The tract at residues 1374–1665 (KQLLRGHMTL…LGIAYVKIAR (292 aa)) is product template (PT) domain. The Proton acceptor; for dehydratase activity role is filled by His-1380. The tract at residues 1513 to 1669 (DEMLGNQSIY…YVKIARPSME (157 aa)) is C-terminal hotdog fold. The active-site Proton donor; for dehydratase activity is Asp-1575. Residues 1682 to 1701 (AGGKTTPQTATKPAAAPVVA) are compositionally biased toward low complexity. A disordered region spans residues 1682–1726 (AGGKTTPQTATKPAAAPVVADHTPRTTESASTVNGVNLDDRKPEG). Over residues 1707–1716 (TTESASTVNG) the composition is skewed to polar residues. The Carrier domain maps to 1750–1824 (QDMIARVKAV…GLLQCVAGAL (75 aa)). Ser-1784 is subject to O-(pantetheine 4'-phosphoryl)serine. The segment covering 1835-1868 (TLTASSDSGINSAKSSILSGTSTSTSTGTTDTGS) has biased composition (low complexity). Positions 1835–1874 (TLTASSDSGINSAKSSILSGTSTSTSTGTTDTGSDVGQSM) are disordered. The tract at residues 2086–2254 (EINPLRIMET…GYVDWTEGMT (169 aa)) is methyltransferase (C-MeT) domain. Positions 2344–2599 (ITGGTGGLGA…GWTPADYVAR (256 aa)) are reductase (R) domain.

It functions in the pathway secondary metabolite biosynthesis; terpenoid biosynthesis. Non-reducing polyketide synthase; part of the gene cluster that mediates the biosynthesis of xenovulene A, an unusual meroterpenoid that has potent inhibitory effects on the human gamma-aminobutyrate A (GABAA) benzodiazepine receptor. The first step of xenovulene A biosynthesis is the biosynthesis of 3-methylorcinaldehyde performed by the non-reducing polyketide synthase aspks1. The salicylate hydroxylase asL1 then catalyzes the oxidative dearomatization of 3-methylorcinaldehyde to yield a dearomatized hydroxycyclohexadione. The 2-oxoglutarate-dependent dioxygenase asL3 further catalyzes the oxidative ring expansion to provide the first tropolone metabolite. The cytochrome P450 monooxygenase asR2 allows the synthesis of tropolone hemiacetal. In parallel, a previously unrecognised class of terpene cyclase, asR6, produces alpha-humulene from farnesylpyrophosphate (FPP). The putative Diels-Alderase asR5 probably catalyzes the formation of the tropolone-humulene skeleton by linking humulene and the polyketide moiety. Oxidative-ring contractions catalyzed by asL4 and asL6 then processively remove carbon atoms from the polyketide to yield xenovulene A. This is 3-methylorcinaldehyde synthase from Sarocladium schorii (Acremonium strictum (strain IMI 501407)).